The following is a 611-amino-acid chain: DNA mismatch repair protein MutL (611 aa).

The interval 353–387 (NRQAAGGNHFATPAPAAAPRPASTASSSWQRQEPV) is disordered. A compositionally biased stretch (low complexity) spans 363 to 380 (ATPAPAAAPRPASTASSS).

The protein belongs to the DNA mismatch repair MutL/HexB family.

Functionally, this protein is involved in the repair of mismatches in DNA. It is required for dam-dependent methyl-directed DNA mismatch repair. May act as a 'molecular matchmaker', a protein that promotes the formation of a stable complex between two or more DNA-binding proteins in an ATP-dependent manner without itself being part of a final effector complex. This chain is DNA mismatch repair protein MutL, found in Erwinia tasmaniensis (strain DSM 17950 / CFBP 7177 / CIP 109463 / NCPPB 4357 / Et1/99).